The sequence spans 512 residues: ATP synthase subunit alpha (512 aa).

An ATP-binding site is contributed by 169–176 (GDRQTGKT).

The protein belongs to the ATPase alpha/beta chains family. In terms of assembly, F-type ATPases have 2 components, CF(1) - the catalytic core - and CF(0) - the membrane proton channel. CF(1) has five subunits: alpha(3), beta(3), gamma(1), delta(1), epsilon(1). CF(0) has four main subunits: a(1), b(1), b'(1) and c(9-12).

The protein localises to the cell inner membrane. It carries out the reaction ATP + H2O + 4 H(+)(in) = ADP + phosphate + 5 H(+)(out). In terms of biological role, produces ATP from ADP in the presence of a proton gradient across the membrane. The alpha chain is a regulatory subunit. This is ATP synthase subunit alpha from Jannaschia sp. (strain CCS1).